We begin with the raw amino-acid sequence, 354 residues long: Putative Xaa-Pro aminopeptidase (354 aa).

Mn(2+) is bound by residues D213, D224, H290, E319, and E333.

It belongs to the peptidase M24B family. Mn(2+) serves as cofactor.

The catalysed reaction is Release of any N-terminal amino acid, including proline, that is linked to proline, even from a dipeptide or tripeptide.. The sequence is that of Putative Xaa-Pro aminopeptidase (pepP) from Mycoplasma genitalium (strain ATCC 33530 / DSM 19775 / NCTC 10195 / G37) (Mycoplasmoides genitalium).